Reading from the N-terminus, the 300-residue chain is tRNA pseudouridine synthase A (300 aa).

The Nucleophile role is filled by Asp67. Tyr125 is a substrate binding site.

The protein belongs to the tRNA pseudouridine synthase TruA family. In terms of assembly, homodimer.

The enzyme catalyses uridine(38/39/40) in tRNA = pseudouridine(38/39/40) in tRNA. Its function is as follows. Formation of pseudouridine at positions 38, 39 and 40 in the anticodon stem and loop of transfer RNAs. The protein is tRNA pseudouridine synthase A of Synechococcus sp. (strain CC9902).